The sequence spans 245 residues: Peroxisome biogenesis protein 19-2 (245 aa).

The interval 17–106 (ALDDFKDLNL…LSSKQQPTGS (90 aa)) is disordered. Composition is skewed to basic and acidic residues over residues 33 to 44 (VKKEEGDKKETE) and 71 to 92 (AKEDHVTEALDKLREQTRETVK). Residues 96-105 (SLSSKQQPTG) show a composition bias toward polar residues. Cysteine methyl ester is present on Cys242. Cys242 carries the S-farnesyl cysteine lipid modification. Positions 243–245 (CVM) are cleaved as a propeptide — removed in mature form.

The protein belongs to the peroxin-19 family. Dimer. Interacts with PEX10 (via C-terminus). Post-translationally, may be farnesylated. As to expression, expressed in roots, leaves, flowers, siliques and stems. Highest expression in roots and leaves.

It is found in the cytoplasm. The protein localises to the peroxisome membrane. Contributes to morphology determination of peroxisomes, but not to import of peroxisomal matrix proteins. Required for proper post-translational import and stabilization of peroxisomal membrane proteins (PMPs). Acts as a cytosolic import receptor for PMPs and delivers them to the docking factor PEX3 at the peroxisomal membrane for subsequent insertion into the membrane. Acts as a chaperone in stabilizing or maintaining PMPs in the lipid bilayer. This chain is Peroxisome biogenesis protein 19-2 (PEX19-2), found in Arabidopsis thaliana (Mouse-ear cress).